Here is a 340-residue protein sequence, read N- to C-terminus: Putative Ig-like domain-containing protein C1 (340 aa).

The region spanning 207-294 is the Ig-like domain; sequence PTVTVTGIER…SSPRVMVPTI (88 aa).

The polypeptide is Putative Ig-like domain-containing protein C1 (Sus scrofa (Pig)).